Reading from the N-terminus, the 1040-residue chain is Multidrug resistance protein MdtB (1040 aa).

A run of 12 helical transmembrane segments spans residues 25–45 (LLMA…PVAA), 347–367 (LMLA…NIPA), 369–389 (IIPG…MVFL), 396–416 (LTLM…IVVI), 440–460 (IGFT…PLLF), 472–492 (FAVT…TLTP), 537–557 (WLTL…WIVI), 863–883 (LGST…VLGV), 888–908 (FIHP…ALLA), 910–930 (IIAG…LIGI), 968–988 (ILMT…STGV), and 998–1018 (IAMV…TPVI).

Belongs to the resistance-nodulation-cell division (RND) (TC 2.A.6) family. MdtB subfamily. In terms of assembly, part of a tripartite efflux system composed of MdtA, MdtB and MdtC. MdtB forms a heteromultimer with MdtC.

It localises to the cell inner membrane. The polypeptide is Multidrug resistance protein MdtB (Salmonella gallinarum (strain 287/91 / NCTC 13346)).